A 216-amino-acid polypeptide reads, in one-letter code: GTP cyclohydrolase 1 (216 aa).

3 residues coordinate Zn(2+): cysteine 108, histidine 111, and cysteine 179.

It belongs to the GTP cyclohydrolase I family. In terms of assembly, homomer.

The enzyme catalyses GTP + H2O = 7,8-dihydroneopterin 3'-triphosphate + formate + H(+). Its pathway is cofactor biosynthesis; 7,8-dihydroneopterin triphosphate biosynthesis; 7,8-dihydroneopterin triphosphate from GTP: step 1/1. In Shewanella baltica (strain OS223), this protein is GTP cyclohydrolase 1.